Here is a 116-residue protein sequence, read N- to C-terminus: Ribonuclease P protein component (116 aa).

The protein belongs to the RnpA family. Consists of a catalytic RNA component (M1 or rnpB) and a protein subunit.

The catalysed reaction is Endonucleolytic cleavage of RNA, removing 5'-extranucleotides from tRNA precursor.. Functionally, RNaseP catalyzes the removal of the 5'-leader sequence from pre-tRNA to produce the mature 5'-terminus. It can also cleave other RNA substrates such as 4.5S RNA. The protein component plays an auxiliary but essential role in vivo by binding to the 5'-leader sequence and broadening the substrate specificity of the ribozyme. This Thermoanaerobacter pseudethanolicus (strain ATCC 33223 / 39E) (Clostridium thermohydrosulfuricum) protein is Ribonuclease P protein component.